Consider the following 284-residue polypeptide: Serine/threonine-protein phosphatase Pgam5, mitochondrial (284 aa).

Residues 8-24 traverse the membrane as a helical segment; sequence LGVPTATLAVGTLLLGD.

It belongs to the phosphoglycerate mutase family. BPG-dependent PGAM subfamily. As to quaternary structure, interacts with skn-1 isoforms a and c.

It localises to the mitochondrion outer membrane. The catalysed reaction is O-phospho-L-seryl-[protein] + H2O = L-seryl-[protein] + phosphate. It carries out the reaction O-phospho-L-threonyl-[protein] + H2O = L-threonyl-[protein] + phosphate. Functionally, displays phosphatase activity for serine/threonine residues. Has apparently no phosphoglycerate mutase activity. This is Serine/threonine-protein phosphatase Pgam5, mitochondrial (pgam-5) from Caenorhabditis elegans.